Consider the following 341-residue polypeptide: Anthranilate phosphoribosyltransferase (341 aa).

5-phospho-alpha-D-ribose 1-diphosphate-binding positions include glycine 81, 84–85, threonine 89, 91–94, 109–117, and serine 121; these read GD, NIST, and KHGSRSVSG. Glycine 81 lines the anthranilate pocket. Serine 93 provides a ligand contact to Mg(2+). Position 167 (arginine 167) interacts with anthranilate. Residues aspartate 226 and glutamate 227 each contribute to the Mg(2+) site.

The protein belongs to the anthranilate phosphoribosyltransferase family. In terms of assembly, homodimer. Requires Mg(2+) as cofactor.

The catalysed reaction is N-(5-phospho-beta-D-ribosyl)anthranilate + diphosphate = 5-phospho-alpha-D-ribose 1-diphosphate + anthranilate. Its pathway is amino-acid biosynthesis; L-tryptophan biosynthesis; L-tryptophan from chorismate: step 2/5. Catalyzes the transfer of the phosphoribosyl group of 5-phosphorylribose-1-pyrophosphate (PRPP) to anthranilate to yield N-(5'-phosphoribosyl)-anthranilate (PRA). The chain is Anthranilate phosphoribosyltransferase from Methylococcus capsulatus (strain ATCC 33009 / NCIMB 11132 / Bath).